A 1030-amino-acid polypeptide reads, in one-letter code: Exportin-T (1030 aa).

This sequence belongs to the exportin family.

The protein resides in the nucleus. It is found in the cytoplasm. Functionally, tRNA nucleus export receptor which facilitates tRNA translocation across the nuclear pore complex. Involved in pre-tRNA splicing, probably by affecting the interaction of pre-tRNA with splicing endonuclease. The polypeptide is Exportin-T (los1) (Aspergillus niger (strain ATCC MYA-4892 / CBS 513.88 / FGSC A1513)).